Here is a 244-residue protein sequence, read N- to C-terminus: DnaJ homolog subfamily C member 4 (244 aa).

Positions 37-102 constitute a J domain; that stretch reads NYYELLGVHP…ESRRNYDHQL (66 aa). The segment at 96–127 is disordered; sequence RNYDHQLHSASPPKSSGSTAEPKYTQQTHSSW. Positions 103-127 are enriched in polar residues; the sequence is HSASPPKSSGSTAEPKYTQQTHSSW. A helical membrane pass occupies residues 159–178; it reads VLGYCLLLMVAGMGLHYVAF. Residues 208–244 are disordered; it reads RANRARIQQERQQRQQPRAEPSLPPESSRIMPQDTSP.

The protein localises to the membrane. This Mus musculus (Mouse) protein is DnaJ homolog subfamily C member 4 (Dnajc4).